Reading from the N-terminus, the 451-residue chain is Chromosomal replication initiator protein DnaA (451 aa).

The interval Met1 to Thr101 is domain I, interacts with DnaA modulators. The interval Thr101–Ser110 is domain II. The segment at Asp111–Ala329 is domain III, AAA+ region. Residues Gly155, Gly157, Lys158, and Thr159 each coordinate ATP. Residues Asn330–Lys451 form a domain IV, binds dsDNA region.

Belongs to the DnaA family. Oligomerizes as a right-handed, spiral filament on DNA at oriC.

It localises to the cytoplasm. Its function is as follows. Plays an essential role in the initiation and regulation of chromosomal replication. ATP-DnaA binds to the origin of replication (oriC) to initiate formation of the DNA replication initiation complex once per cell cycle. Binds the DnaA box (a 9 base pair repeat at the origin) and separates the double-stranded (ds)DNA. Forms a right-handed helical filament on oriC DNA; dsDNA binds to the exterior of the filament while single-stranded (ss)DNA is stabiized in the filament's interior. The ATP-DnaA-oriC complex binds and stabilizes one strand of the AT-rich DNA unwinding element (DUE), permitting loading of DNA polymerase. After initiation quickly degrades to an ADP-DnaA complex that is not apt for DNA replication. Binds acidic phospholipids. This chain is Chromosomal replication initiator protein DnaA, found in Streptococcus uberis (strain ATCC BAA-854 / 0140J).